Reading from the N-terminus, the 648-residue chain is Biosynthetic arginine decarboxylase (648 aa).

Position 109 is an N6-(pyridoxal phosphate)lysine (Lys-109). Residue 291 to 301 participates in substrate binding; sequence IDVGGGLGIDF.

Belongs to the Orn/Lys/Arg decarboxylase class-II family. SpeA subfamily. Mg(2+) is required as a cofactor. Requires pyridoxal 5'-phosphate as cofactor.

The enzyme catalyses L-arginine + H(+) = agmatine + CO2. Its pathway is amine and polyamine biosynthesis; agmatine biosynthesis; agmatine from L-arginine: step 1/1. Its function is as follows. Catalyzes the biosynthesis of agmatine from arginine. The protein is Biosynthetic arginine decarboxylase of Prochlorococcus marinus (strain MIT 9515).